Reading from the N-terminus, the 161-residue chain is 6,7-dimethyl-8-ribityllumazine synthase (161 aa).

5-amino-6-(D-ribitylamino)uracil contacts are provided by residues Trp26, 58-60 (AFE), and 81-83 (VVI). 86-87 (GT) is a binding site for (2S)-2-hydroxy-3-oxobutyl phosphate. His89 functions as the Proton donor in the catalytic mechanism. Phe114 is a 5-amino-6-(D-ribitylamino)uracil binding site. Arg128 provides a ligand contact to (2S)-2-hydroxy-3-oxobutyl phosphate.

The protein belongs to the DMRL synthase family.

It catalyses the reaction (2S)-2-hydroxy-3-oxobutyl phosphate + 5-amino-6-(D-ribitylamino)uracil = 6,7-dimethyl-8-(1-D-ribityl)lumazine + phosphate + 2 H2O + H(+). It participates in cofactor biosynthesis; riboflavin biosynthesis; riboflavin from 2-hydroxy-3-oxobutyl phosphate and 5-amino-6-(D-ribitylamino)uracil: step 1/2. Catalyzes the formation of 6,7-dimethyl-8-ribityllumazine by condensation of 5-amino-6-(D-ribitylamino)uracil with 3,4-dihydroxy-2-butanone 4-phosphate. This is the penultimate step in the biosynthesis of riboflavin. The polypeptide is 6,7-dimethyl-8-ribityllumazine synthase (Nocardioides sp. (strain ATCC BAA-499 / JS614)).